Consider the following 333-residue polypeptide: Glycogenin-1 (333 aa).

Position 2 is an N-acetylthreonine (T2). 4 residues coordinate UDP: L9, T11, N12, and Y15. UDP-alpha-D-glucose-binding residues include L9, T11, N12, and Y15. Residue S44 is modified to Phosphoserine; by PKA; in vitro. R77 lines the UDP pocket. UDP-alpha-D-glucose-binding residues include R77, K86, D102, A103, D104, N133, S134, D160, D163, and Q164. UDP contacts are provided by D102, A103, and D104. D102 is a Mn(2+) binding site. D104 is a Mn(2+) binding site. O-linked (Glc...) tyrosine glycosylation is present at Y195. The UDP site is built by H212, G215, and K218. H212 is a Mn(2+) binding site. Residues G215 and K218 each coordinate UDP-alpha-D-glucose. Residues 284–316 (SHLSLGETPATTQPFVSSEERKERWEQGQADYM) are interaction with GYS1.

Belongs to the glycosyltransferase 8 family. Glycogenin subfamily. In terms of assembly, part of the GYS1-GYG1 complex, a heterooctamer composed of a tetramer of GYS1 and 2 dimers of GYG1, where each GYS1 protomer binds to one GYG1 subunit (via GYG1 C-terminus); the GYS1 tetramer may dissociate from GYG1 dimers to continue glycogen polymerization on its own. May also form a heterooctamer complex with GYS2 (via GYG1 C-terminus). The cofactor is Mn(2+). Post-translationally, self-glycosylated by the transfer of glucose residues from UDP-glucose to itself, forming an alpha-1,4-glycan of around 10 residues attached to Tyr-195. Phosphorylated. Detected in heart, skeletal muscle, brain and testis, and at lower levels in kidney.

It is found in the cytoplasm. The protein localises to the nucleus. The catalysed reaction is L-tyrosyl-[glycogenin] + UDP-alpha-D-glucose = alpha-D-glucosyl-L-tyrosyl-[glycogenin] + UDP + H(+). The enzyme catalyses [1,4-alpha-D-glucosyl](n)-L-tyrosyl-[glycogenin] + UDP-alpha-D-glucose = [1,4-alpha-D-glucosyl](n+1)-L-tyrosyl-[glycogenin] + UDP + H(+). It functions in the pathway glycan biosynthesis; glycogen biosynthesis. In terms of biological role, glycogenin participates in the glycogen biosynthetic process along with glycogen synthase and glycogen branching enzyme. It catalyzes the formation of a short alpha (1,4)-glucosyl chain covalently attached via a glucose 1-O-tyrosyl linkage to internal tyrosine residues and these chains act as primers for the elongation reaction catalyzed by glycogen synthase. In Oryctolagus cuniculus (Rabbit), this protein is Glycogenin-1 (GYG1).